A 281-amino-acid polypeptide reads, in one-letter code: sn-glycerol-3-phosphate transport system permease protein UgpE (281 aa).

A run of 6 helical transmembrane segments spans residues 14–34, 82–104, 113–133, 142–162, 188–210, and 247–267; these read VMLIIGVLLILFPLYVAFVAA, VMAFAITVGKITVSMLSAYAIVY, FFWLIFLTLMLPVEVRIFPTI, LDSYTGLTLPLMASATATFLF, FWDIVLPLSKTNLAALFVITFIY, and WNQVMAAMILTLIPPVAVVLL. The ABC transmembrane type-1 domain occupies 77–268; the sequence is LFNSFVMAFA…IPPVAVVLLM (192 aa).

It belongs to the binding-protein-dependent transport system permease family. UgpAE subfamily. In terms of assembly, the complex is composed of two ATP-binding proteins (UgpC), two transmembrane proteins (UgpA and UgpE) and a solute-binding protein (UgpB).

It is found in the cell inner membrane. Its function is as follows. Part of the ABC transporter complex UgpBAEC involved in sn-glycerol-3-phosphate (G3P) import. Probably responsible for the translocation of the substrate across the membrane. The polypeptide is sn-glycerol-3-phosphate transport system permease protein UgpE (ugpE) (Yersinia enterocolitica serotype O:8 / biotype 1B (strain NCTC 13174 / 8081)).